The primary structure comprises 478 residues: Glutamyl-tRNA(Gln) amidotransferase subunit A (478 aa).

Catalysis depends on charge relay system residues lysine 72 and serine 147. The active-site Acyl-ester intermediate is serine 171.

This sequence belongs to the amidase family. GatA subfamily. Heterotrimer of A, B and C subunits.

It catalyses the reaction L-glutamyl-tRNA(Gln) + L-glutamine + ATP + H2O = L-glutaminyl-tRNA(Gln) + L-glutamate + ADP + phosphate + H(+). Its function is as follows. Allows the formation of correctly charged Gln-tRNA(Gln) through the transamidation of misacylated Glu-tRNA(Gln) in organisms which lack glutaminyl-tRNA synthetase. The reaction takes place in the presence of glutamine and ATP through an activated gamma-phospho-Glu-tRNA(Gln). This is Glutamyl-tRNA(Gln) amidotransferase subunit A from Saccharolobus solfataricus (strain ATCC 35092 / DSM 1617 / JCM 11322 / P2) (Sulfolobus solfataricus).